The following is a 390-amino-acid chain: Leu/Ile/Val-binding protein homolog 6 (390 aa).

The first 21 residues, 1-21, serve as a signal peptide directing secretion; it reads MKKIALTALAVFSLAASAAYA.

Belongs to the leucine-binding protein family.

Component of an amino-acid transport system. This is Leu/Ile/Val-binding protein homolog 6 from Brucella abortus (strain 2308).